The sequence spans 81 residues: Photosystem I iron-sulfur center (81 aa).

2 consecutive 4Fe-4S ferredoxin-type domains span residues 2–31 (SHSV…MIPW) and 39–68 (IAPA…VRVY). C11, C14, C17, C21, C48, C51, C54, and C58 together coordinate [4Fe-4S] cluster.

In terms of assembly, the eukaryotic PSI reaction center is composed of at least 11 subunits. The cofactor is [4Fe-4S] cluster.

Its subcellular location is the plastid. The protein resides in the chloroplast thylakoid membrane. It carries out the reaction reduced [plastocyanin] + hnu + oxidized [2Fe-2S]-[ferredoxin] = oxidized [plastocyanin] + reduced [2Fe-2S]-[ferredoxin]. Apoprotein for the two 4Fe-4S centers FA and FB of photosystem I (PSI); essential for photochemical activity. FB is the terminal electron acceptor of PSI, donating electrons to ferredoxin. The C-terminus interacts with PsaA/B/D and helps assemble the protein into the PSI complex. Required for binding of PsaD and PsaE to PSI. PSI is a plastocyanin-ferredoxin oxidoreductase, converting photonic excitation into a charge separation, which transfers an electron from the donor P700 chlorophyll pair to the spectroscopically characterized acceptors A0, A1, FX, FA and FB in turn. This is Photosystem I iron-sulfur center from Drimys granadensis.